We begin with the raw amino-acid sequence, 1939 residues long: Myosin-1 (1939 aa).

Residues 33-82 (DAKTSVFVVDPKESFVKATVQSREGGKVTAKTEAGATVTVKDDQVFPMNP) form the Myosin N-terminal SH3-like domain. Phosphothreonine occurs at positions 64 and 69. The Myosin motor domain maps to 86-782 (DKIEDMAMMT…LLGLLEEMRD (697 aa)). K130 carries the post-translational modification N6,N6,N6-trimethyllysine. 179–186 (GESGAGKT) contacts ATP. Y389 bears the Phosphotyrosine mark. Position 419 is a phosphothreonine (T419). Residue Y424 is modified to Phosphotyrosine. Residues 659–681 (LNKLMTNLRSTHPHFVRCIIPNE) are actin-binding. Position 757 is a pros-methylhistidine (H757). Residues 761 to 775 (KFGHTKVFFKAGLLG) form an actin-binding region. The IQ domain occupies 785-814 (LAQLITRTQAMCRGFLARVEYQKMVERRES). Residues 843–1939 (LLKSAETEKE…EVHTKIISEE (1097 aa)) are a coiled coil. A phosphoserine mark is found at S1092, S1096, S1162, and S1237. T1241 bears the Phosphothreonine mark. 2 positions are modified to phosphoserine: S1243 and S1261. Phosphothreonine is present on residues T1265 and T1286. 4 positions are modified to phosphoserine: S1288, S1292, S1303, and S1306. T1467 carries the post-translational modification Phosphothreonine. S1474 is modified (phosphoserine). At Y1492 the chain carries Phosphotyrosine. At S1495 the chain carries Phosphoserine. T1501 is subject to Phosphothreonine. S1514 carries the post-translational modification Phosphoserine. T1517 is subject to Phosphothreonine. S1542, S1554, S1574, S1600, S1603, S1714, and S1726 each carry phosphoserine. T1730 and T1736 each carry phosphothreonine. A Phosphoserine modification is found at S1739.

The protein belongs to the TRAFAC class myosin-kinesin ATPase superfamily. Myosin family. As to quaternary structure, muscle myosin is a hexameric protein that consists of 2 heavy chain subunits (MHC), 2 alkali light chain subunits (MLC) and 2 regulatory light chain subunits (MLC-2). Interacts with SLC26A5.

It localises to the cytoplasm. The protein localises to the myofibril. Required for normal hearing. It plays a role in cochlear amplification of auditory stimuli, likely through the positive regulation of prestin (SLC26A5) activity and outer hair cell (OHC) electromotility. The protein is Myosin-1 of Homo sapiens (Human).